Reading from the N-terminus, the 613-residue chain is Forkhead box protein O (613 aa).

Disordered stretches follow at residues 39–90 (RARS…KNSS), 182–205 (KSVRRRAASMETSRYEKRRGRAKK), 217–269 (GLND…RLSP), and 317–360 (QGFS…PASG). At threonine 44 the chain carries Phosphothreonine; by PKB/AKT1. Positions 63–80 (TKASNQQLAPGDSQQAIQ) are enriched in polar residues. The residue at position 75 (serine 75) is a Phosphoserine. The segment covering 81 to 90 (NANAAKKNSS) has biased composition (low complexity). Positions 95 to 201 (WGNLSYADLI…ETSRYEKRRG (107 aa)) form a DNA-binding region, fork-head. Phosphoserine; by PKB/AKT1 is present on serine 190. Composition is skewed to polar residues over residues 221–230 (ATPSPSSSVS) and 256–265 (RASSNASSCG). The residue at position 259 (serine 259) is a Phosphoserine; by PKB/AKT1. Residues serine 262, serine 263, and serine 268 each carry the phosphoserine modification. Residues 327–336 (SQPPPPPYQP) show a composition bias toward pro residues. Residues 337-353 (PQHQQAQQQQQQQSPYA) are compositionally biased toward low complexity.

Interacts with melt.

The protein localises to the cytoplasm. It is found in the nucleus. Transcription factor involved in the regulation of the insulin signaling pathway. Consistently activates both the downstream target Thor\d4EBP and the feedback control target InR. Involved in negative regulation of the cell cycle, modulating cell growth and proliferation. In response to cellular stresses, such as nutrient deprivation or increased levels of reactive oxygen species, foxo is activated and inhibits growth through the action of target genes such as Thor. Foxo activated in the adult fat body can regulate lifespan in adults; an insulin peptide itself may function as one secondary messenger of insulin-regulated aging. Also regulates Lip4, homolog of human acid lipases, thereby acting as a key modulator of lipid metabolism by insulin signaling and integrates insulin responses to glucose and lipid homeostasis. In Drosophila melanogaster (Fruit fly), this protein is Forkhead box protein O.